The sequence spans 232 residues: 2,3,4,5-tetrahydropyridine-2,6-dicarboxylate N-acetyltransferase (232 aa).

It belongs to the transferase hexapeptide repeat family. DapH subfamily.

The catalysed reaction is (S)-2,3,4,5-tetrahydrodipicolinate + acetyl-CoA + H2O = L-2-acetamido-6-oxoheptanedioate + CoA. It participates in amino-acid biosynthesis; L-lysine biosynthesis via DAP pathway; LL-2,6-diaminopimelate from (S)-tetrahydrodipicolinate (acetylase route): step 1/3. Catalyzes the transfer of an acetyl group from acetyl-CoA to tetrahydrodipicolinate. The polypeptide is 2,3,4,5-tetrahydropyridine-2,6-dicarboxylate N-acetyltransferase (Streptococcus suis (strain 98HAH33)).